Reading from the N-terminus, the 77-residue chain is Translation initiation factor IF-1, chloroplastic (77 aa).

One can recognise an S1-like domain in the interval 1–71; sequence MKEQKWVHEG…TRGRIIYRLR (71 aa).

The protein belongs to the IF-1 family. As to quaternary structure, component of the 30S ribosomal translation pre-initiation complex which assembles on the 30S ribosome in the order IF-2 and IF-3, IF-1 and N-formylmethionyl-tRNA(fMet); mRNA recruitment can occur at any time during PIC assembly.

The protein localises to the plastid. The protein resides in the chloroplast. In terms of biological role, one of the essential components for the initiation of protein synthesis. Stabilizes the binding of IF-2 and IF-3 on the 30S subunit to which N-formylmethionyl-tRNA(fMet) subsequently binds. Helps modulate mRNA selection, yielding the 30S pre-initiation complex (PIC). Upon addition of the 50S ribosomal subunit IF-1, IF-2 and IF-3 are released leaving the mature 70S translation initiation complex. The chain is Translation initiation factor IF-1, chloroplastic from Cercidiphyllum japonicum (Katsura tree).